Consider the following 243-residue polypeptide: 3-deoxy-manno-octulosonate cytidylyltransferase (243 aa).

Belongs to the KdsB family.

It localises to the cytoplasm. The enzyme catalyses 3-deoxy-alpha-D-manno-oct-2-ulosonate + CTP = CMP-3-deoxy-beta-D-manno-octulosonate + diphosphate. The protein operates within nucleotide-sugar biosynthesis; CMP-3-deoxy-D-manno-octulosonate biosynthesis; CMP-3-deoxy-D-manno-octulosonate from 3-deoxy-D-manno-octulosonate and CTP: step 1/1. Its pathway is bacterial outer membrane biogenesis; lipopolysaccharide biosynthesis. In terms of biological role, activates KDO (a required 8-carbon sugar) for incorporation into bacterial lipopolysaccharide in Gram-negative bacteria. This is 3-deoxy-manno-octulosonate cytidylyltransferase from Helicobacter acinonychis (strain Sheeba).